A 236-amino-acid polypeptide reads, in one-letter code: Lipoarabinomannan carrier protein LprG (236 aa).

The first 25 residues, 1–25 (MQTRPRFAVQSLFAILATAAALVAG), serve as a signal peptide directing secretion. Residue Cys26 is the site of N-palmitoyl cysteine attachment. The S-diacylglycerol cysteine moiety is linked to residue Cys26.

Belongs to the LppX/LprAFG lipoprotein family. As to quaternary structure, interacts with itself, Ag85A (MSMEG_6398), LppI (MSMEG_3851) and LppK (MSMEG_3904) in vivo.

It is found in the cell inner membrane. Its subcellular location is the secreted. The protein resides in the cell wall. Functionally, helps membrane protein MSMEG_3069/MSMEI_2992 (P55) transport triacylglycerides (TAG) across the inner cell membrane into the periplasm and probably ultimately to the outer membrane. Binds TAG in its hydrophobic cavity and transfers it between lipid bilayers. TAG probably regulates lipid metabolism and growth regulation and plays a structural role in the outer membrane. Also binds mannosides, lipoarabinomannan and lipomannan and various glycolipids in the same cavity. Required for MSMEG_3069/MSMEI_2992 export activity. Export of ethidium bromide by MSMEG_3069/MSMEI_2992 can be complemented by the equivalent operon from M.tuberculosis (lprG-Rv1410c). Involved in mycolylation. The chain is Lipoarabinomannan carrier protein LprG from Mycolicibacterium smegmatis (strain ATCC 700084 / mc(2)155) (Mycobacterium smegmatis).